Consider the following 577-residue polypeptide: NKAP family protein UM04995 (577 aa).

Positions 1–479 (MPTLAERLGS…YGGALLPGEG (479 aa)) are disordered. Over residues 20–31 (KSSHDREQELRS) the composition is skewed to basic and acidic residues. Over residues 36-49 (SKQTSRNTAHQDLA) the composition is skewed to polar residues. The span at 50–60 (SSERRSIDREL) shows a compositional bias: basic and acidic residues. The segment covering 70 to 89 (SPLSSPQNGSSPRRQRGSPS) has biased composition (low complexity). 3 stretches are compositionally biased toward basic and acidic residues: residues 127–163 (PRED…DSRR), 170–193 (SGDR…REAP), and 265–297 (DSSS…DKHH). Basic residues-rich tracts occupy residues 298 to 316 (SSSR…RRSS) and 325 to 336 (SRHRHTRSSRSH). Residues 340-350 (DDDDDDDEDVD) are compositionally biased toward acidic residues. A compositionally biased stretch (basic and acidic residues) spans 363 to 385 (KVSDGSDSGRSESETDSDSDARS). A compositionally biased stretch (basic residues) spans 386–395 (SRHRRRHHKS). 2 stretches are compositionally biased toward basic and acidic residues: residues 396–408 (DRSS…ESEK) and 417–439 (SESE…RRDS). The stretch at 529 to 570 (RKENQVISAEEKRTMLRLQAEEKAKKEREIVSQFKELVDTLQ) forms a coiled coil.

The protein belongs to the NKAP family.

The chain is NKAP family protein UM04995 from Mycosarcoma maydis (Corn smut fungus).